A 278-amino-acid polypeptide reads, in one-letter code: NAD-capped RNA hydrolase NudC (278 aa).

Arg84 is a binding site for substrate. The Zn(2+) site is built by Cys114 and Cys117. A substrate-binding site is contributed by Glu127. Residue Cys132 coordinates Zn(2+). Tyr140 is a substrate binding site. The region spanning 141 to 264 (PRISPSMIVL…SIARYLIEAY (124 aa)) is the Nudix hydrolase domain. Ala174, Glu190, and Glu194 together coordinate a divalent metal cation. The Nudix box motif lies at 175-196 (GFVEPGESAEDCVHREVMEEVQ). 208–215 (QCWPFPHS) is a substrate binding site. Residue Glu235 participates in a divalent metal cation binding. Ala257 contributes to the substrate binding site.

Belongs to the Nudix hydrolase family. NudC subfamily. In terms of assembly, homodimer. Requires Mg(2+) as cofactor. The cofactor is Mn(2+). It depends on Zn(2+) as a cofactor.

The enzyme catalyses a 5'-end NAD(+)-phospho-ribonucleoside in mRNA + H2O = a 5'-end phospho-adenosine-phospho-ribonucleoside in mRNA + beta-nicotinamide D-ribonucleotide + 2 H(+). It carries out the reaction NAD(+) + H2O = beta-nicotinamide D-ribonucleotide + AMP + 2 H(+). It catalyses the reaction NADH + H2O = reduced beta-nicotinamide D-ribonucleotide + AMP + 2 H(+). In terms of biological role, mRNA decapping enzyme that specifically removes the nicotinamide adenine dinucleotide (NAD) cap from a subset of mRNAs by hydrolyzing the diphosphate linkage to produce nicotinamide mononucleotide (NMN) and 5' monophosphate mRNA. The NAD-cap is present at the 5'-end of some mRNAs and stabilizes RNA against 5'-processing. Has preference for mRNAs with a 5'-end purine. Catalyzes the hydrolysis of a broad range of dinucleotide pyrophosphates. The polypeptide is NAD-capped RNA hydrolase NudC (Pseudomonas syringae pv. syringae (strain B728a)).